The primary structure comprises 449 residues: Hyaluronidase-3 (449 aa).

An N-terminal signal peptide occupies residues 1-23 (MYHIWIKFLAAWIFLKKFNGVHV). Disulfide bonds link Cys-47-Cys-340 and Cys-211-Cys-227. 3 N-linked (GlcNAc...) asparagine glycosylation sites follow: Asn-67, Asn-103, and Asn-111. Glu-135 functions as the Proton donor in the catalytic mechanism. N-linked (GlcNAc...) asparagine glycosylation occurs at Asn-153. The N-linked (GlcNAc...) asparagine glycan is linked to Asn-357. 3 cysteine pairs are disulfide-bonded: Cys-365–Cys-376, Cys-370–Cys-427, and Cys-429–Cys-438. N-linked (GlcNAc...) asparagine glycosylation is present at Asn-401. In terms of domain architecture, EGF-like spans 427–438 (CQCYQGWKGLYC).

It belongs to the glycosyl hydrolase 56 family. As to quaternary structure, monomer. In terms of tissue distribution, expressed by the venom gland.

The protein resides in the secreted. It carries out the reaction Random hydrolysis of (1-&gt;4)-linkages between N-acetyl-beta-D-glucosamine and D-glucuronate residues in hyaluronate.. Its function is as follows. Snake venom endo-hyaluronidase that degrades hyaluronan to smaller oligosaccharide fragments. In venom, it is not toxic by itself, but increases the diffusion of other venom proteins by degrading the extracellular matrix. In addition, it displays antiedematogenic activity. In Cerastes cerastes (Horned desert viper), this protein is Hyaluronidase-3.